The sequence spans 201 residues: UPF0301 protein MSMEG_6921/MSMEI_6732 (201 aa).

This sequence belongs to the UPF0301 (AlgH) family.

The protein is UPF0301 protein MSMEG_6921/MSMEI_6732 of Mycolicibacterium smegmatis (strain ATCC 700084 / mc(2)155) (Mycobacterium smegmatis).